A 501-amino-acid polypeptide reads, in one-letter code: L-arabinose isomerase (501 aa).

Positions 306, 333, 350, and 450 each coordinate Mn(2+).

The protein belongs to the arabinose isomerase family. As to quaternary structure, homohexamer. Mn(2+) serves as cofactor.

The catalysed reaction is beta-L-arabinopyranose = L-ribulose. It participates in carbohydrate degradation; L-arabinose degradation via L-ribulose; D-xylulose 5-phosphate from L-arabinose (bacterial route): step 1/3. Functionally, catalyzes the conversion of L-arabinose to L-ribulose. The chain is L-arabinose isomerase from Pectobacterium atrosepticum (strain SCRI 1043 / ATCC BAA-672) (Erwinia carotovora subsp. atroseptica).